The primary structure comprises 140 residues: Regulator of ribonuclease activity B (140 aa).

A disordered region spans residues 115 to 140 (FEDPNAQDDDEDDGEAIDEDDNGIRH). Acidic residues predominate over residues 119–140 (NAQDDDEDDGEAIDEDDNGIRH).

Belongs to the RraB family. Interacts with the C-terminal region of Rne.

It is found in the cytoplasm. Globally modulates RNA abundance by binding to RNase E (Rne) and regulating its endonucleolytic activity. Can modulate Rne action in a substrate-dependent manner by altering the composition of the degradosome. This Pantoea ananatis (strain LMG 20103) protein is Regulator of ribonuclease activity B.